The primary structure comprises 255 residues: Small ribosomal subunit protein uS2 (255 aa).

The tract at residues 226–255 (QGVSNEEVAAEQNIDLDEKEKSEETEATEE) is disordered.

Belongs to the universal ribosomal protein uS2 family.

The protein is Small ribosomal subunit protein uS2 of Staphylococcus aureus (strain Mu3 / ATCC 700698).